The sequence spans 255 residues: 5'-nucleotidase SurE (255 aa).

4 residues coordinate a divalent metal cation: Asp-8, Asp-9, Ser-39, and Asn-95.

This sequence belongs to the SurE nucleotidase family. It depends on a divalent metal cation as a cofactor.

Its subcellular location is the cytoplasm. It carries out the reaction a ribonucleoside 5'-phosphate + H2O = a ribonucleoside + phosphate. Nucleotidase that shows phosphatase activity on nucleoside 5'-monophosphates. The sequence is that of 5'-nucleotidase SurE from Thermosipho melanesiensis (strain DSM 12029 / CIP 104789 / BI429).